Here is a 657-residue protein sequence, read N- to C-terminus: Hemocyanin (657 aa).

An N-linked (GlcNAc...) asparagine glycan is attached at Asn-167. Positions 194, 198, 224, 344, 348, and 384 each coordinate Cu cation. Intrachain disulfides connect Cys-483/Cys-502 and Cys-562/Cys-609.

This sequence belongs to the tyrosinase family. Hemocyanin subfamily. In terms of assembly, it consists of at least four very similar subunits. As to expression, hemolymph.

It is found in the secreted. Its subcellular location is the extracellular space. Hemocyanins are copper-containing oxygen carriers occurring freely dissolved in the hemolymph of many mollusks and arthropods. The polypeptide is Hemocyanin (Palinurus vulgaris (European spiny lobster)).